The chain runs to 331 residues: Probable leucine carboxyl methyltransferase 1 (331 aa).

S-adenosyl-L-methionine is bound by residues R82, G107, D131, 179-180 (DL), and E206.

This sequence belongs to the methyltransferase superfamily. LCMT family.

The enzyme catalyses [phosphatase 2A protein]-C-terminal L-leucine + S-adenosyl-L-methionine = [phosphatase 2A protein]-C-terminal L-leucine methyl ester + S-adenosyl-L-homocysteine. Its function is as follows. Methylates the carboxyl group of the C-terminal leucine residue of protein phosphatase 2A catalytic subunits to form alpha-leucine ester residues. The polypeptide is Probable leucine carboxyl methyltransferase 1 (Caenorhabditis briggsae).